We begin with the raw amino-acid sequence, 179 residues long: Large ribosomal subunit protein uL6 (179 aa).

It belongs to the universal ribosomal protein uL6 family. In terms of assembly, part of the 50S ribosomal subunit.

This protein binds to the 23S rRNA, and is important in its secondary structure. It is located near the subunit interface in the base of the L7/L12 stalk, and near the tRNA binding site of the peptidyltransferase center. This chain is Large ribosomal subunit protein uL6, found in Mycobacterium sp. (strain KMS).